A 98-amino-acid polypeptide reads, in one-letter code: Cell cycle protein GpsB (98 aa).

Residues Leu-34–Met-71 adopt a coiled-coil conformation.

It belongs to the GpsB family. As to quaternary structure, forms polymers through the coiled coil domains. Interacts with PBP1, MreC and EzrA.

Its subcellular location is the cytoplasm. In terms of biological role, divisome component that associates with the complex late in its assembly, after the Z-ring is formed, and is dependent on DivIC and PBP2B for its recruitment to the divisome. Together with EzrA, is a key component of the system that regulates PBP1 localization during cell cycle progression. Its main role could be the removal of PBP1 from the cell pole after pole maturation is completed. Also contributes to the recruitment of PBP1 to the division complex. Not essential for septum formation. This is Cell cycle protein GpsB from Geobacillus kaustophilus (strain HTA426).